The chain runs to 429 residues: Ribosomal RNA small subunit methyltransferase B (429 aa).

Residues 254–260 (CAAPGGK), aspartate 277, aspartate 303, and aspartate 322 each bind S-adenosyl-L-methionine. The active-site Nucleophile is cysteine 375.

The protein belongs to the class I-like SAM-binding methyltransferase superfamily. RsmB/NOP family.

The protein resides in the cytoplasm. It catalyses the reaction cytidine(967) in 16S rRNA + S-adenosyl-L-methionine = 5-methylcytidine(967) in 16S rRNA + S-adenosyl-L-homocysteine + H(+). Specifically methylates the cytosine at position 967 (m5C967) of 16S rRNA. The polypeptide is Ribosomal RNA small subunit methyltransferase B (Escherichia coli O6:H1 (strain CFT073 / ATCC 700928 / UPEC)).